The primary structure comprises 626 residues: Elongation factor 4 (626 aa).

Residues 14–195 enclose the tr-type G domain; that stretch reads SVIRNFCIIA…QIVMDVPAPH (182 aa). GTP contacts are provided by residues 26-31 and 142-145; these read DHGKST and NKID. A disordered region spans residues 603-626; that stretch reads LSTGEDSNDRDTKDKIRAAQKTEG. Positions 609 to 626 are enriched in basic and acidic residues; the sequence is SNDRDTKDKIRAAQKTEG.

This sequence belongs to the TRAFAC class translation factor GTPase superfamily. Classic translation factor GTPase family. LepA subfamily.

Its subcellular location is the cell membrane. It catalyses the reaction GTP + H2O = GDP + phosphate + H(+). In terms of biological role, required for accurate and efficient protein synthesis under certain stress conditions. May act as a fidelity factor of the translation reaction, by catalyzing a one-codon backward translocation of tRNAs on improperly translocated ribosomes. Back-translocation proceeds from a post-translocation (POST) complex to a pre-translocation (PRE) complex, thus giving elongation factor G a second chance to translocate the tRNAs correctly. Binds to ribosomes in a GTP-dependent manner. The protein is Elongation factor 4 of Bifidobacterium longum (strain DJO10A).